Consider the following 1291-residue polypeptide: Tat-binding homolog 7 (1291 aa).

Residues 1-345 (MPRSDGFSPR…HNRGERERGR (345 aa)) form a disordered region. Over residues 64–82 (RYYEEEYHEAISSEEDERR) the composition is skewed to basic and acidic residues. The span at 88–99 (SSNSMTYRQQVM) shows a compositional bias: polar residues. A compositionally biased stretch (acidic residues) spans 226–257 (EEEEEGAEEDEQSGEKDPEEEEDDSSNAESSE). Over residues 298-311 (NRHHRNRNGSRRRR) the composition is skewed to basic residues. Position 432 to 439 (432 to 439 (GPPGTGKT)) interacts with ATP. One can recognise a Bromo domain in the interval 914-1022 (ALQRQMRLFF…DAIDDLIECE (109 aa)). A disordered region spans residues 1110 to 1194 (KSEEGTSTST…MKDASKDSTP (85 aa)). Positions 1128 to 1142 (NKKKLLKKKKGQKKS) are enriched in basic residues. The segment covering 1148-1164 (EEHDEDSTVEDAGEDTI) has biased composition (acidic residues). Positions 1168 to 1190 (LEIKKNQETPNSEHDIEMKDASK) are enriched in basic and acidic residues.

Belongs to the AAA ATPase family.

Its function is as follows. Thought to form a complex that enhances transcription from repetitive DNA sequences by modulating chromatin structure. The polypeptide is Tat-binding homolog 7 (lex-1) (Caenorhabditis elegans).